The primary structure comprises 469 residues: Aspartyl/glutamyl-tRNA(Asn/Gln) amidotransferase subunit B (469 aa).

The protein belongs to the GatB/GatE family. GatB subfamily. As to quaternary structure, heterotrimer of A, B and C subunits.

It catalyses the reaction L-glutamyl-tRNA(Gln) + L-glutamine + ATP + H2O = L-glutaminyl-tRNA(Gln) + L-glutamate + ADP + phosphate + H(+). It carries out the reaction L-aspartyl-tRNA(Asn) + L-glutamine + ATP + H2O = L-asparaginyl-tRNA(Asn) + L-glutamate + ADP + phosphate + 2 H(+). Allows the formation of correctly charged Asn-tRNA(Asn) or Gln-tRNA(Gln) through the transamidation of misacylated Asp-tRNA(Asn) or Glu-tRNA(Gln) in organisms which lack either or both of asparaginyl-tRNA or glutaminyl-tRNA synthetases. The reaction takes place in the presence of glutamine and ATP through an activated phospho-Asp-tRNA(Asn) or phospho-Glu-tRNA(Gln). This is Aspartyl/glutamyl-tRNA(Asn/Gln) amidotransferase subunit B from Thermus thermophilus (strain ATCC BAA-163 / DSM 7039 / HB27).